A 132-amino-acid polypeptide reads, in one-letter code: Small ribosomal subunit protein uS8 (132 aa).

Belongs to the universal ribosomal protein uS8 family. In terms of assembly, part of the 30S ribosomal subunit. Contacts proteins S5 and S12.

Its function is as follows. One of the primary rRNA binding proteins, it binds directly to 16S rRNA central domain where it helps coordinate assembly of the platform of the 30S subunit. This is Small ribosomal subunit protein uS8 from Roseiflexus castenholzii (strain DSM 13941 / HLO8).